The primary structure comprises 175 residues: Large ribosomal subunit protein uL10 (175 aa).

The protein belongs to the universal ribosomal protein uL10 family. Part of the ribosomal stalk of the 50S ribosomal subunit. The N-terminus interacts with L11 and the large rRNA to form the base of the stalk. The C-terminus forms an elongated spine to which L12 dimers bind in a sequential fashion forming a multimeric L10(L12)X complex.

Forms part of the ribosomal stalk, playing a central role in the interaction of the ribosome with GTP-bound translation factors. In Mycolicibacterium smegmatis (strain ATCC 700084 / mc(2)155) (Mycobacterium smegmatis), this protein is Large ribosomal subunit protein uL10.